We begin with the raw amino-acid sequence, 410 residues long: Glycylpeptide N-tetradecanoyltransferase (410 aa).

Tetradecanoyl-CoA contacts are provided by phenylalanine 30, tryptophan 31, phenylalanine 162, leucine 163, cysteine 164, valine 165, serine 171, arginine 173, leucine 174, and alanine 175.

Belongs to the NMT family. In terms of assembly, heterodimer composed of NMT and AK2; AK2 myristoylation stabilizes the complex.

Its subcellular location is the cytoplasm. It catalyses the reaction N-terminal glycyl-[protein] + tetradecanoyl-CoA = N-tetradecanoylglycyl-[protein] + CoA + H(+). Its function is as follows. Adds a myristoyl group to the N-terminal glycine residue of certain cellular proteins. Myristoylates adenylate kinase AK2. During the asexual blood stage, may myristoylate proteins such as ARO, CDPK1 and GAP45. Probably by mediating protein myristoylation, plays a role in the assembly of the inner membrane complex during the early stages of schizogony and in the formation of rhoptries in the late stages and thus merozoite egress. This chain is Glycylpeptide N-tetradecanoyltransferase, found in Plasmodium falciparum (isolate 3D7).